We begin with the raw amino-acid sequence, 404 residues long: 4-hydroxyphenylpyruvate dioxygenase (404 aa).

VOC domains follow at residues 28–163 (GYDH…FIQR) and 194–353 (YVDH…IFTK). Fe cation-binding residues include histidine 197, histidine 280, and glutamate 364.

Belongs to the 4HPPD family. The cofactor is Fe cation.

The enzyme catalyses 3-(4-hydroxyphenyl)pyruvate + O2 = homogentisate + CO2. It participates in amino-acid degradation; L-phenylalanine degradation; acetoacetate and fumarate from L-phenylalanine: step 3/6. Its function is as follows. Key enzyme in the degradation of tyrosine. This chain is 4-hydroxyphenylpyruvate dioxygenase (TFA), found in Tetrahymena thermophila.